The sequence spans 402 residues: Tryptophan synthase beta chain (402 aa).

An N6-(pyridoxal phosphate)lysine modification is found at lysine 91.

This sequence belongs to the TrpB family. As to quaternary structure, tetramer of two alpha and two beta chains. It depends on pyridoxal 5'-phosphate as a cofactor.

It catalyses the reaction (1S,2R)-1-C-(indol-3-yl)glycerol 3-phosphate + L-serine = D-glyceraldehyde 3-phosphate + L-tryptophan + H2O. It functions in the pathway amino-acid biosynthesis; L-tryptophan biosynthesis; L-tryptophan from chorismate: step 5/5. In terms of biological role, the beta subunit is responsible for the synthesis of L-tryptophan from indole and L-serine. The chain is Tryptophan synthase beta chain from Streptococcus thermophilus (strain ATCC BAA-491 / LMD-9).